Reading from the N-terminus, the 524-residue chain is GMP synthase [glutamine-hydrolyzing] (524 aa).

In terms of domain architecture, Glutamine amidotransferase type-1 spans 7 to 196 (PVLVVDFGAQ…LHELAGIPAS (190 aa)). The active-site Nucleophile is C84. Catalysis depends on residues H170 and E172. One can recognise a GMPS ATP-PPase domain in the interval 197–398 (WTPSNIADVL…LGLPEEIVAR (202 aa)). Residue 224-230 (SGGVDSA) participates in ATP binding.

In terms of assembly, homodimer.

The catalysed reaction is XMP + L-glutamine + ATP + H2O = GMP + L-glutamate + AMP + diphosphate + 2 H(+). Its pathway is purine metabolism; GMP biosynthesis; GMP from XMP (L-Gln route): step 1/1. Functionally, catalyzes the synthesis of GMP from XMP. In Nocardia farcinica (strain IFM 10152), this protein is GMP synthase [glutamine-hydrolyzing].